The following is a 439-amino-acid chain: Indole-3-pyruvate monooxygenase YUCCA4 (439 aa).

Residue 49-54 (GAGPAG) participates in FAD binding. 226–231 (GCGNSG) contacts NADP(+).

Belongs to the FMO family. The cofactor is FAD.

It catalyses the reaction indole-3-pyruvate + NADPH + O2 + H(+) = (indol-3-yl)acetate + CO2 + NADP(+) + H2O. Functionally, involved in auxin biosynthesis in anthers. This Oryza sativa subsp. japonica (Rice) protein is Indole-3-pyruvate monooxygenase YUCCA4.